The primary structure comprises 507 residues: ATP synthase subunit alpha (507 aa).

169 to 176 (GDRQTGKT) serves as a coordination point for ATP.

The protein belongs to the ATPase alpha/beta chains family. F-type ATPases have 2 components, CF(1) - the catalytic core - and CF(0) - the membrane proton channel. CF(1) has five subunits: alpha(3), beta(3), gamma(1), delta(1), epsilon(1). CF(0) has three main subunits: a(1), b(2) and c(9-12). The alpha and beta chains form an alternating ring which encloses part of the gamma chain. CF(1) is attached to CF(0) by a central stalk formed by the gamma and epsilon chains, while a peripheral stalk is formed by the delta and b chains.

Its subcellular location is the cell membrane. The catalysed reaction is ATP + H2O + 4 H(+)(in) = ADP + phosphate + 5 H(+)(out). Produces ATP from ADP in the presence of a proton gradient across the membrane. The alpha chain is a regulatory subunit. This chain is ATP synthase subunit alpha, found in Desulforudis audaxviator (strain MP104C).